The chain runs to 715 residues: Fatty acid oxidation complex subunit alpha (715 aa).

An enoyl-CoA hydratase/isomerase region spans residues 1–190 (MIYQGKAITV…KVGAVDAVVA (190 aa)). Substrate is bound at residue Asp-297. The tract at residues 312-715 (KDVKLAAVLG…MAKNGQKFFG (404 aa)) is 3-hydroxyacyl-CoA dehydrogenase. NAD(+) is bound by residues Met-325, Asp-344, 401-403 (VVE), Lys-408, and Ser-430. The active-site For 3-hydroxyacyl-CoA dehydrogenase activity is the His-451. Asn-454 provides a ligand contact to NAD(+). The substrate site is built by Asn-501 and Tyr-660.

In the N-terminal section; belongs to the enoyl-CoA hydratase/isomerase family. The protein in the C-terminal section; belongs to the 3-hydroxyacyl-CoA dehydrogenase family. Heterotetramer of two alpha chains (FadB) and two beta chains (FadA).

It carries out the reaction a (3S)-3-hydroxyacyl-CoA + NAD(+) = a 3-oxoacyl-CoA + NADH + H(+). The catalysed reaction is a (3S)-3-hydroxyacyl-CoA = a (2E)-enoyl-CoA + H2O. The enzyme catalyses a 4-saturated-(3S)-3-hydroxyacyl-CoA = a (3E)-enoyl-CoA + H2O. It catalyses the reaction (3S)-3-hydroxybutanoyl-CoA = (3R)-3-hydroxybutanoyl-CoA. It carries out the reaction a (3Z)-enoyl-CoA = a 4-saturated (2E)-enoyl-CoA. The catalysed reaction is a (3E)-enoyl-CoA = a 4-saturated (2E)-enoyl-CoA. It participates in lipid metabolism; fatty acid beta-oxidation. Its function is as follows. Involved in the aerobic and anaerobic degradation of long-chain fatty acids via beta-oxidation cycle. Catalyzes the formation of 3-oxoacyl-CoA from enoyl-CoA via L-3-hydroxyacyl-CoA. It can also use D-3-hydroxyacyl-CoA and cis-3-enoyl-CoA as substrate. The protein is Fatty acid oxidation complex subunit alpha of Pseudomonas aeruginosa (strain LESB58).